The chain runs to 129 residues: uncharacterized protein (129 aa).

It belongs to the asfivirus C129R family.

Its subcellular location is the virion. Plays a role in the inhibition of type I interferon signaling pathway. Mechanistically, specifically interacts with 2',3'-cGAMP and cleaves it via its phosphodiesterase activity. In turn, prevents 2',3'-cGAMP interaction with host ER-resident STING1 leading to inhibition of downstream signaling pathway and type I interferon production. This is an uncharacterized protein from African swine fever virus (strain Badajoz 1971 Vero-adapted) (Ba71V).